Here is a 652-residue protein sequence, read N- to C-terminus: MENRMNELVSLLNQYAKEYYTQDNPTVSDSQYDQLYRELVELEKQHPENILPNSPTHRVGGLVLEGFEKYQHEYPLYSLQDAFSKEELIAFDKRVKAEFPTAAYMAELKIDGLSVSLTYVNGVLQVGATRGDGNIGENITENLKRVHDIPLHLDQSLDITVRGECYLPKESFEAINIEKRANGEQEFANPRNAAAGTLRQLNTGIVAKRKLATFLYQEASPTQKETQDDVLKELESYGFSVNHHRLISSSMEKIWDFIQTIEKDRVSLPYDIDGIVIKVNSIAMQEELGFTVKAPRWAIAYKFPAEEKEAEILSVDWTVGRTGVVTPTANLTPVQLAGTTVSRATLHNVDYIAEKDIRIGDTVVVYKAGDIIPAVLNVVMSKRNQQEVMLIPKLCPSCGSELVHFEGEVALRCINPLCPNQIKERLAHFASRDAMNITGFGPSLVEKLFDAHLIADVADIYRLSIENLLTLDGIKEKSATKIYHAIQSSKENSAEKLLFGLGIRHVGSKASRLLLEEFGNLRQLSQASQESIASIDGLGGVIAKSLHTFFEKEEVDKLLEELTSYNVNFNYLGKRVSTDAQLSGLTVVLTGKLEKMTRNEAKEKLQNLGAKVTGSVSKKTDLIVAGSDAGSKLTKAQDLGITIQDEDWLLNL.

Residues 29–33 (DSQYD), 78–79 (SL), and Glu107 contribute to the NAD(+) site. Lys109 (N6-AMP-lysine intermediate) is an active-site residue. Residues Arg130, Glu164, Lys278, and Lys302 each coordinate NAD(+). Residues Cys395, Cys398, Cys413, and Cys418 each coordinate Zn(2+). The region spanning 577–652 (STDAQLSGLT…IQDEDWLLNL (76 aa)) is the BRCT domain.

Belongs to the NAD-dependent DNA ligase family. LigA subfamily. The cofactor is Mg(2+). Requires Mn(2+) as cofactor.

It catalyses the reaction NAD(+) + (deoxyribonucleotide)n-3'-hydroxyl + 5'-phospho-(deoxyribonucleotide)m = (deoxyribonucleotide)n+m + AMP + beta-nicotinamide D-nucleotide.. In terms of biological role, DNA ligase that catalyzes the formation of phosphodiester linkages between 5'-phosphoryl and 3'-hydroxyl groups in double-stranded DNA using NAD as a coenzyme and as the energy source for the reaction. It is essential for DNA replication and repair of damaged DNA. The chain is DNA ligase from Streptococcus agalactiae serotype V (strain ATCC BAA-611 / 2603 V/R).